Reading from the N-terminus, the 269-residue chain is uncharacterized protein (269 aa).

A coiled-coil region spans residues 52 to 262 (KNVYEQLVAT…RKILVESINK (211 aa)).

This is an uncharacterized protein from Caenorhabditis elegans.